The following is a 463-amino-acid chain: 6-phosphofructo-2-kinase/fructose-2,6-bisphosphatase 3 (463 aa).

Positions 1–246 (MPLELTQSRV…VYYLMNIHWQ (246 aa)) are 6-phosphofructo-2-kinase. Residue 42 to 50 (GLPARGKTY) coordinates ATP. Positions 75 and 99 each coordinate beta-D-fructose 6-phosphate. The active site involves Asp-125. Thr-127 and Arg-133 together coordinate beta-D-fructose 6-phosphate. Cys-155 is a catalytic residue. Position 164 to 169 (164 to 169 (NIMEVK)) interacts with ATP. Beta-D-fructose 6-phosphate-binding residues include Lys-169, Arg-191, and Tyr-195. A fructose-2,6-bisphosphatase region spans residues 247–463 (PRTIYLCRHG…PNPLMRSNSH (217 aa)). Arg-254 is a beta-D-fructose 2,6-bisphosphate binding site. His-255 acts as the Tele-phosphohistidine intermediate in catalysis. The beta-D-fructose 2,6-bisphosphate site is built by Asn-261 and Gly-267. The active-site Proton donor/acceptor is Glu-324. Tyr-335 is a beta-D-fructose 2,6-bisphosphate binding site. Residue 346-349 (YALA) coordinates ATP. 3 residues coordinate beta-D-fructose 2,6-bisphosphate: Lys-353, Tyr-364, and Gln-390. ATP contacts are provided by residues 390–394 (QAVCV) and Tyr-426. The disordered stretch occupies residues 444–463 (RERSEDAKKGPNPLMRSNSH). Ser-462 carries the phosphoserine; by AMPK and PKA modification.

In the C-terminal section; belongs to the phosphoglycerate mutase family. In terms of assembly, homodimer. Forms a heterodimer with PFKFB2. Post-translationally, phosphorylation by AMPK stimulates activity. Brain.

It carries out the reaction beta-D-fructose 2,6-bisphosphate + H2O = beta-D-fructose 6-phosphate + phosphate. The catalysed reaction is beta-D-fructose 6-phosphate + ATP = beta-D-fructose 2,6-bisphosphate + ADP + H(+). In terms of biological role, catalyzes both the synthesis and degradation of fructose 2,6-bisphosphate. In Bos taurus (Bovine), this protein is 6-phosphofructo-2-kinase/fructose-2,6-bisphosphatase 3 (PFKFB3).